A 261-amino-acid polypeptide reads, in one-letter code: Ribosomal RNA small subunit methyltransferase A (261 aa).

Positions 20, 22, 47, 68, 90, and 110 each coordinate S-adenosyl-L-methionine.

Belongs to the class I-like SAM-binding methyltransferase superfamily. rRNA adenine N(6)-methyltransferase family. RsmA subfamily.

The protein localises to the cytoplasm. The enzyme catalyses adenosine(1518)/adenosine(1519) in 16S rRNA + 4 S-adenosyl-L-methionine = N(6)-dimethyladenosine(1518)/N(6)-dimethyladenosine(1519) in 16S rRNA + 4 S-adenosyl-L-homocysteine + 4 H(+). Specifically dimethylates two adjacent adenosines (A1518 and A1519) in the loop of a conserved hairpin near the 3'-end of 16S rRNA in the 30S particle. May play a critical role in biogenesis of 30S subunits. This chain is Ribosomal RNA small subunit methyltransferase A, found in Prosthecochloris aestuarii (strain DSM 271 / SK 413).